The sequence spans 495 residues: Probable cytochrome P450 508C1 (495 aa).

The chain crosses the membrane as a helical span at residues 3 to 21 (LLNSLLLLFLIYLIHSFYI). Cys442 contributes to the heme binding site.

It belongs to the cytochrome P450 family. Requires heme as cofactor.

The protein resides in the membrane. This chain is Probable cytochrome P450 508C1 (cyp508C1), found in Dictyostelium discoideum (Social amoeba).